Reading from the N-terminus, the 69-residue chain is VLIIAVLFLTACQLTTAETYSRGRQKHRARRSTDKNSKWTRECTRSGGACYSHNQCCDDFCSTATSTCI.

Residues 1 to 17 (VLIIAVLFLTACQLTTA) form the signal peptide. The propeptide occupies 18-41 (ETYSRGRQKHRARRSTDKNSKWTR). Cystine bridges form between Cys-43–Cys-57, Cys-50–Cys-61, and Cys-56–Cys-68.

It belongs to the conotoxin O1 superfamily. Expressed by the venom duct.

It is found in the secreted. The protein is Conotoxin Eb6.21 (E1) of Conus ebraeus (Hebrew cone).